The sequence spans 551 residues: Dihydroxy-acid dehydratase (551 aa).

Mg(2+) is bound at residue aspartate 78. A [2Fe-2S] cluster-binding site is contributed by cysteine 119. The Mg(2+) site is built by aspartate 120 and lysine 121. Lysine 121 is subject to N6-carboxylysine. Residue cysteine 191 coordinates [2Fe-2S] cluster. Glutamate 441 provides a ligand contact to Mg(2+). Serine 467 acts as the Proton acceptor in catalysis.

Belongs to the IlvD/Edd family. As to quaternary structure, homodimer. [2Fe-2S] cluster is required as a cofactor. The cofactor is Mg(2+).

It carries out the reaction (2R)-2,3-dihydroxy-3-methylbutanoate = 3-methyl-2-oxobutanoate + H2O. The enzyme catalyses (2R,3R)-2,3-dihydroxy-3-methylpentanoate = (S)-3-methyl-2-oxopentanoate + H2O. It functions in the pathway amino-acid biosynthesis; L-isoleucine biosynthesis; L-isoleucine from 2-oxobutanoate: step 3/4. Its pathway is amino-acid biosynthesis; L-valine biosynthesis; L-valine from pyruvate: step 3/4. In terms of biological role, functions in the biosynthesis of branched-chain amino acids. Catalyzes the dehydration of (2R,3R)-2,3-dihydroxy-3-methylpentanoate (2,3-dihydroxy-3-methylvalerate) into 2-oxo-3-methylpentanoate (2-oxo-3-methylvalerate) and of (2R)-2,3-dihydroxy-3-methylbutanoate (2,3-dihydroxyisovalerate) into 2-oxo-3-methylbutanoate (2-oxoisovalerate), the penultimate precursor to L-isoleucine and L-valine, respectively. This is Dihydroxy-acid dehydratase from Pyrococcus abyssi (strain GE5 / Orsay).